The sequence spans 646 residues: uncharacterized protein (646 aa).

A run of 8 helical transmembrane segments spans residues 20-42, 55-77, 97-115, 127-149, 159-181, 188-206, 216-238, and 251-273; these read ILSR…LYLL, FLAG…IHQV, LLHF…HYML, YTFD…FSYW, IAFV…FFKL, ILLG…LLLA, YGAV…YHLF, and WVTM…IGTA.

It is found in the cell membrane. This is an uncharacterized protein from Bacillus subtilis (strain 168).